The primary structure comprises 94 residues: Evasin P1086 (94 aa).

Positions 1 to 28 (MAFNVITFLQLAVFVVILFNINLHSASA) are cleaved as a signal peptide. Disulfide bonds link Cys48–Cys67, Cys52–Cys69, and Cys63–Cys80. Residue Asn74 is glycosylated (N-linked (GlcNAc...) asparagine).

Its subcellular location is the secreted. In terms of biological role, salivary chemokine-binding protein which binds to host chemokines CXCL1, CXCL2, CXCL3, CXCL5, CXCL6, CXCL10, CXCL12 and CXCL13. The polypeptide is Evasin P1086 (Ixodes ricinus (Common tick)).